Consider the following 271-residue polypeptide: Regulatory protein RecX (271 aa).

The protein belongs to the RecX family.

The protein localises to the cytoplasm. Its function is as follows. Modulates RecA activity. The chain is Regulatory protein RecX from Lactobacillus gasseri (strain ATCC 33323 / DSM 20243 / BCRC 14619 / CIP 102991 / JCM 1131 / KCTC 3163 / NCIMB 11718 / NCTC 13722 / AM63).